Consider the following 283-residue polypeptide: uncharacterized protein (283 aa).

One can recognise an HTH araC/xylS-type domain in the interval 172–270; the sequence is EAIRDYIDER…ERSPSEYRRQ (99 aa). 2 DNA-binding regions (H-T-H motif) span residues 189–210 and 237–260; these read ESVA…QKTG and VKEV…RKNT.

This is an uncharacterized protein from Escherichia coli (strain K12).